Here is a 1106-residue protein sequence, read N- to C-terminus: Protein transport protein Sec31A (1106 aa).

7 WD repeats span residues 4-47 (KEVD…EIFE), 68-111 (RYHK…AGDK), 120-160 (KHTG…TPMT), 166-206 (QPPE…PIIK), 209-254 (DHSN…SPLR), 258-298 (NHAR…VLYE), and 301-342 (TNTQ…DGLR). Residues 161–471 (PGAKTQPPED…IDASQTEFEK (311 aa)) are interaction with SEC13. A WD 8; interaction with SEC13 repeat occupies 397 to 430 (SFSFGGKLVTFENVRMPSHQGAEQQQQQHHVFIS). A phosphoserine mark is found at serine 527 and serine 532. Residue lysine 647 forms a Glycyl lysine isopeptide (Lys-Gly) (interchain with G-Cter in ubiquitin) linkage. Serine 799 is subject to Phosphoserine. Residues 800 to 999 (PKIPYEEQQL…TKKITKKPIP (200 aa)) are interaction with PDCD6. An ALG-2-binding site motif-2 (ABS-2) motif is present at residues 842-848 (GFIMHGN). The interval 859-980 (TSPGHMHTQV…EGAPGAPIGN (122 aa)) is disordered. A compositionally biased stretch (polar residues) spans 917–939 (PQSQMLQQQPSAPVPLSSQSSFP). Threonine 1047 is subject to Phosphothreonine. Residue serine 1049 is modified to Phosphoserine. Lysine 1103 participates in a covalent cross-link: Glycyl lysine isopeptide (Lys-Gly) (interchain with G-Cter in ubiquitin).

Belongs to the WD repeat SEC31 family. As to quaternary structure, COPII is composed of at least 5 proteins: the SEC23/24 complex, the SEC13/31 complex and SAR1. SEC13 and SEC31 make a 2:2 tetramer that forms the edge element of the COPII outer coat. The tetramer self-assembles in multiple copies to form the complete polyhedral cage. Interacts (via WD 8) with SEC13. Interacts with PDCD6; interaction takes place in response to cytosolic calcium increase and leads to bridge together the BCR(KLHL12) complex and SEC31A, leading to monoubiquitination. Interacts with KLHL12. Monoubiquitinated by the BCR(KLHL12) E3 ubiquitin ligase complex, leading to regulate the size of COPII coats.

Its subcellular location is the cytoplasm. The protein localises to the cytoplasmic vesicle. It is found in the COPII-coated vesicle membrane. It localises to the endoplasmic reticulum membrane. Functionally, component of the coat protein complex II (COPII) which promotes the formation of transport vesicles from the endoplasmic reticulum (ER). The coat has two main functions, the physical deformation of the endoplasmic reticulum membrane into vesicles and the selection of cargo molecules. This Pongo abelii (Sumatran orangutan) protein is Protein transport protein Sec31A (SEC31A).